Reading from the N-terminus, the 948-residue chain is Coatomer subunit beta-2 (948 aa).

6 HEAT repeats span residues 49–87, 92–126, 127–164, 274–311, 312–349, and 391–428; these read ETIPQLFITIIRYVLPSEDHTIQKLLLLYLELIEKTDSK, PEMILICQNLRNNLQHPNEYIRGVTLRFLCRMKET, EIVEPLTPSVLQNLEHRHPFVRRNAILAIMSIYKLPHG, TAIRAAANTYCQLLLSQSDNNVKLILLDRLYELKTLHR, DIMVELIIDVLRALSSPNLDIRRKTLDIALDLITHHNI, and EVASTVVHLLMDFLGDSNVASALDVVVFVREIIETNPK.

In terms of assembly, oligomeric complex that consists of at least the alpha, beta, beta', gamma, delta, epsilon and zeta subunits.

Its subcellular location is the cytoplasm. The protein localises to the golgi apparatus membrane. The protein resides in the cytoplasmic vesicle. It is found in the COPI-coated vesicle membrane. Functionally, the coatomer is a cytosolic protein complex that binds to dilysine motifs and reversibly associates with Golgi non-clathrin-coated vesicles, which further mediate biosynthetic protein transport from the ER, via the Golgi up to the trans Golgi network. Coatomer complex is required for budding from Golgi membranes, and is essential for the retrograde Golgi-to-ER transport of dilysine-tagged proteins. In Arabidopsis thaliana (Mouse-ear cress), this protein is Coatomer subunit beta-2.